An 841-amino-acid chain; its full sequence is Probable inorganic carbon transporter subunit DabA 1 (841 aa).

Positions 352, 354, 536, and 551 each coordinate Zn(2+).

Belongs to the inorganic carbon transporter (TC 9.A.2) DabA family. Forms a complex with DabB. It depends on Zn(2+) as a cofactor.

The protein localises to the cell inner membrane. Its function is as follows. Part of an energy-coupled inorganic carbon pump. The protein is Probable inorganic carbon transporter subunit DabA 1 of Bradyrhizobium sp. (strain ORS 278).